The following is a 372-amino-acid chain: Lipoyl synthase, mitochondrial (372 aa).

Residues 1–27 (MSLRCGGAVRTVGPRVFGRYVFSPVRE) constitute a mitochondrion transit peptide. Positions 106, 111, 117, 137, 141, 144, and 352 each coordinate [4Fe-4S] cluster. Residues 122-341 (EYATATATIM…EKVGNELGFH (220 aa)) enclose the Radical SAM core domain.

It belongs to the radical SAM superfamily. Lipoyl synthase family. [4Fe-4S] cluster serves as cofactor.

It is found in the mitochondrion. It catalyses the reaction [[Fe-S] cluster scaffold protein carrying a second [4Fe-4S](2+) cluster] + N(6)-octanoyl-L-lysyl-[protein] + 2 oxidized [2Fe-2S]-[ferredoxin] + 2 S-adenosyl-L-methionine + 4 H(+) = [[Fe-S] cluster scaffold protein] + N(6)-[(R)-dihydrolipoyl]-L-lysyl-[protein] + 4 Fe(3+) + 2 hydrogen sulfide + 2 5'-deoxyadenosine + 2 L-methionine + 2 reduced [2Fe-2S]-[ferredoxin]. Its pathway is protein modification; protein lipoylation via endogenous pathway; protein N(6)-(lipoyl)lysine from octanoyl-[acyl-carrier-protein]: step 2/2. Functionally, catalyzes the radical-mediated insertion of two sulfur atoms into the C-6 and C-8 positions of the octanoyl moiety bound to the lipoyl domains of lipoate-dependent enzymes, thereby converting the octanoylated domains into lipoylated derivatives. This Bos taurus (Bovine) protein is Lipoyl synthase, mitochondrial.